The primary structure comprises 382 residues: Succinate--CoA ligase [ADP-forming] subunit beta (382 aa).

Residues Lys46, 53–55 (GRG), Val95, and Glu100 each bind ATP. Residues Asn192 and Asp206 each coordinate Mg(2+). Residues Asn257 and 314–316 (GIT) contribute to the substrate site.

Belongs to the succinate/malate CoA ligase beta subunit family. As to quaternary structure, heterotetramer of two alpha and two beta subunits. Mg(2+) serves as cofactor.

It carries out the reaction succinate + ATP + CoA = succinyl-CoA + ADP + phosphate. The catalysed reaction is GTP + succinate + CoA = succinyl-CoA + GDP + phosphate. It participates in carbohydrate metabolism; tricarboxylic acid cycle; succinate from succinyl-CoA (ligase route): step 1/1. Succinyl-CoA synthetase functions in the citric acid cycle (TCA), coupling the hydrolysis of succinyl-CoA to the synthesis of either ATP or GTP and thus represents the only step of substrate-level phosphorylation in the TCA. The beta subunit provides nucleotide specificity of the enzyme and binds the substrate succinate, while the binding sites for coenzyme A and phosphate are found in the alpha subunit. This Bacteroides fragilis (strain ATCC 25285 / DSM 2151 / CCUG 4856 / JCM 11019 / LMG 10263 / NCTC 9343 / Onslow / VPI 2553 / EN-2) protein is Succinate--CoA ligase [ADP-forming] subunit beta.